The following is a 210-amino-acid chain: Prolactin (210 aa).

An N-terminal signal peptide occupies residues 1–23; it reads MAEGSRLYFAVTVLMCAFVSING. 2 disulfides stabilise this stretch: cysteine 69/cysteine 183 and cysteine 200/cysteine 210.

It belongs to the somatotropin/prolactin family. Pituitary gland.

Its subcellular location is the secreted. In Hypophthalmichthys nobilis (Bighead carp), this protein is Prolactin (prl).